The primary structure comprises 331 residues: Ferredoxin--NADP reductase (331 aa).

7 residues coordinate FAD: Glu38, Gln46, Tyr51, Ala91, Leu125, Asp282, and Ser323.

This sequence belongs to the ferredoxin--NADP reductase type 2 family. In terms of assembly, homodimer. FAD serves as cofactor.

The catalysed reaction is 2 reduced [2Fe-2S]-[ferredoxin] + NADP(+) + H(+) = 2 oxidized [2Fe-2S]-[ferredoxin] + NADPH. The chain is Ferredoxin--NADP reductase from Deinococcus geothermalis (strain DSM 11300 / CIP 105573 / AG-3a).